Consider the following 175-residue polypeptide: Large ribosomal subunit protein uL10 (175 aa).

This sequence belongs to the universal ribosomal protein uL10 family. As to quaternary structure, part of the ribosomal stalk of the 50S ribosomal subunit. The N-terminus interacts with L11 and the large rRNA to form the base of the stalk. The C-terminus forms an elongated spine to which L12 dimers bind in a sequential fashion forming a multimeric L10(L12)X complex.

Its function is as follows. Forms part of the ribosomal stalk, playing a central role in the interaction of the ribosome with GTP-bound translation factors. This chain is Large ribosomal subunit protein uL10, found in Synechococcus elongatus (strain ATCC 33912 / PCC 7942 / FACHB-805) (Anacystis nidulans R2).